Reading from the N-terminus, the 185-residue chain is V-type ATP synthase subunit E (185 aa).

It belongs to the V-ATPase E subunit family.

Functionally, produces ATP from ADP in the presence of a proton gradient across the membrane. The protein is V-type ATP synthase subunit E of Deinococcus geothermalis (strain DSM 11300 / CIP 105573 / AG-3a).